The chain runs to 383 residues: Delta(12) acyl-lipid conjugase (11E,13E-forming) (383 aa).

Positions 1-30 are disordered; that stretch reads MGEVGPTNRTKTKLDKQQESENRVPHEPPP. The span at 12-26 shows a compositional bias: basic and acidic residues; the sequence is TKLDKQQESENRVPH. 2 helical membrane passes run 56–76 and 84–104; these read VIHD…YIPM and VAWP…LVLG. Residues 105–109 carry the Histidine box-1 motif; it reads HECGH. The short motif at 141–145 is the Histidine box-2 element; sequence HRRHH. Helical transmembrane passes span 179-199, 225-245, and 249-269; these read FLMI…FNAN, VIAS…IALA, and VWLI…IVLI. Positions 315–319 match the Histidine box-3 motif; that stretch reads HLVHH.

It belongs to the fatty acid desaturase type 1 family. Expressed in developing seeds, but not in leaves.

The protein resides in the membrane. It carries out the reaction a (9Z,12Z)-octadecadienoyl-containing glycerolipid + 2 Fe(II)-[cytochrome b5] + O2 + 2 H(+) = a (9Z,11E,13E)-octadecatrienoyl-containing glycerolipid + 2 Fe(III)-[cytochrome b5] + 2 H2O. It catalyses the reaction (9Z,12Z,15Z)-octadecatrienoyl-containing glycerolipid + 2 Fe(II)-[cytochrome b5] + O2 + 2 H(+) = a (9Z,11E,13E,15Z)-octadecatetraenoyl-containing glycerolipid + 2 Fe(III)-[cytochrome b5] + 2 H2O. It participates in lipid metabolism; polyunsaturated fatty acid biosynthesis. In terms of biological role, converts linoleic acid to alpha-eleostearic acid (18:3(9Z,11E,13E)) and alpha-linolenic acid to alpha-parinaric acid (18:4(9Z,11E, 13E, 15Z)). Converts a single cis double bond at carbon 12 to two conjugated trans bonds at positions 11 and 13. The chain is Delta(12) acyl-lipid conjugase (11E,13E-forming) from Impatiens balsamina (Balsam).